A 374-amino-acid polypeptide reads, in one-letter code: Aminodeoxychorismate lyase (374 aa).

Belongs to the class-IV pyridoxal-phosphate-dependent aminotransferase family. Homodimer. The cofactor is pyridoxal 5'-phosphate.

It localises to the cytoplasm. The enzyme catalyses 4-amino-4-deoxychorismate = 4-aminobenzoate + pyruvate + H(+). Its pathway is cofactor biosynthesis; tetrahydrofolate biosynthesis; 4-aminobenzoate from chorismate: step 2/2. In terms of biological role, converts 4-amino-4-deoxychorismate into 4-aminobenzoate (PABA) and pyruvate. This is Aminodeoxychorismate lyase (ABZ2) from Saccharomyces cerevisiae (strain ATCC 204508 / S288c) (Baker's yeast).